A 155-amino-acid chain; its full sequence is Ribosome maturation factor RimP (155 aa).

This sequence belongs to the RimP family.

The protein resides in the cytoplasm. Required for maturation of 30S ribosomal subunits. In Synechococcus sp. (strain RCC307), this protein is Ribosome maturation factor RimP.